Reading from the N-terminus, the 268-residue chain is Acidic leucine-rich nuclear phosphoprotein 32 family member E (268 aa).

Met1 is modified (N-acetylmethionine). LRR repeat units follow at residues 18 to 38, 43 to 64, 65 to 87, and 89 to 110; these read EVTELVLDNCLCVNGEIEGLN, ELEFLSMANVELSSLARLPSLN, KLRKLELSDNIISGGLEVLAEKC, and NLTYLNLSGNKIKDLSTVEALQ. A Glycyl lysine isopeptide (Lys-Gly) (interchain with G-Cter in SUMO2) cross-link involves residue Lys68. Positions 123-161 constitute an LRRCT domain; sequence CEITNLEDYRESIFELLQQITYLDGFDQEDNEAPDSEEE. Composition is skewed to acidic residues over residues 149-216 and 226-247; these read DQED…EEEV and IQDEEDDDDYVEEGEEEEEEEE. A disordered region spans residues 149 to 268; that stretch reads DQEDNEAPDS…AEDDGEEEDD (120 aa). The tract at residues 215-268 is ZID domain; sequence EVGLSYLMKEEIQDEEDDDDYVEEGEEEEEEEEGGLRGEKRKRDAEDDGEEEDD. Over residues 248–259 the composition is skewed to basic and acidic residues; that stretch reads GGLRGEKRKRDA.

This sequence belongs to the ANP32 family. Interacts with the importin alpha KPNA1 and KPNA2. Component of a SWR1-like complex, composed of EP400, KAT5/TIP60, TRRAP, BRD8, RUVBL1, RUVBL2, ING3 and ANP32E; the complex does not contain SRCAP. Interacts with H2A.Z/H2AZ1. Post-translationally, phosphorylated. The phosphorylation is nuclear localization signal (NLS)-dependent. Expressed in peripheral blood leukocytes, colon, small intestine, prostate, thymus, spleen, skeletal muscle, liver and kidney.

The protein resides in the cytoplasm. It localises to the nucleus. In terms of biological role, histone chaperone that specifically mediates the genome-wide removal of histone H2A.Z/H2AZ1 from the nucleosome: removes H2A.Z/H2AZ1 from its normal sites of deposition, especially from enhancer and insulator regions. Not involved in deposition of H2A.Z/H2AZ1 in the nucleosome. May stabilize the evicted H2A.Z/H2AZ1-H2B dimer, thus shifting the equilibrium towards dissociation and the off-chromatin state. Inhibits activity of protein phosphatase 2A (PP2A). Does not inhibit protein phosphatase 1. May play a role in cerebellar development and synaptogenesis. This Homo sapiens (Human) protein is Acidic leucine-rich nuclear phosphoprotein 32 family member E (ANP32E).